A 216-amino-acid chain; its full sequence is Probable nicotinate-nucleotide adenylyltransferase (216 aa).

It belongs to the NadD family.

It catalyses the reaction nicotinate beta-D-ribonucleotide + ATP + H(+) = deamido-NAD(+) + diphosphate. Its pathway is cofactor biosynthesis; NAD(+) biosynthesis; deamido-NAD(+) from nicotinate D-ribonucleotide: step 1/1. In terms of biological role, catalyzes the reversible adenylation of nicotinate mononucleotide (NaMN) to nicotinic acid adenine dinucleotide (NaAD). The polypeptide is Probable nicotinate-nucleotide adenylyltransferase (Geobacter metallireducens (strain ATCC 53774 / DSM 7210 / GS-15)).